The sequence spans 233 residues: Glyceraldehyde-3-phosphate dehydrogenase A, chloroplastic (233 aa).

D-glyceraldehyde 3-phosphate-binding positions include 49-51, Thr80, Arg95, 108-109, and Arg131; these read SCT and TG. Catalysis depends on Cys50, which acts as the Nucleophile. Asn213 is an NADP(+) binding site.

It belongs to the glyceraldehyde-3-phosphate dehydrogenase family. Tetramer of either four A chains (GAPDH 2) or two A and two B chains (GAPDH 1).

It localises to the plastid. The protein resides in the chloroplast. It carries out the reaction D-glyceraldehyde 3-phosphate + phosphate + NADP(+) = (2R)-3-phospho-glyceroyl phosphate + NADPH + H(+). It functions in the pathway carbohydrate biosynthesis; Calvin cycle. The sequence is that of Glyceraldehyde-3-phosphate dehydrogenase A, chloroplastic (GAPA) from Sinapis alba (White mustard).